We begin with the raw amino-acid sequence, 134 residues long: Probable thionin-2.4 (134 aa).

Positions Met-1–Ala-24 are cleaved as a signal peptide. 3 disulfides stabilise this stretch: Cys-27/Cys-64, Cys-28/Cys-56, and Cys-40/Cys-50. A propeptide spans Asp-71 to Ala-134 (acidic domain).

It belongs to the plant thionin (TC 1.C.44) family.

It is found in the secreted. Thionins are small plant proteins which are toxic to animal cells. They seem to exert their toxic effect at the level of the cell membrane. Their precise function is not known. In Arabidopsis thaliana (Mouse-ear cress), this protein is Probable thionin-2.4.